The sequence spans 29 residues: Cyclotide mden-A (29 aa).

The segment at residues 1 to 29 (GIPTCGETCTLGTCNTPGCTCSWPICTKN) is a cross-link (cyclopeptide (Gly-Asn)). 3 disulfide bridges follow: C5-C19, C9-C21, and C14-C26.

Belongs to the cyclotide family. Moebius subfamily. This is a cyclic peptide.

Probably participates in a plant defense mechanism. The sequence is that of Cyclotide mden-A from Melicytus dentatus (Tree violet).